Consider the following 215-residue polypeptide: 3-demethoxyubiquinol 3-hydroxylase (215 aa).

6 residues coordinate Fe cation: E64, E94, H97, E146, E178, and H181.

It belongs to the COQ7 family. Fe cation is required as a cofactor.

The protein localises to the cell membrane. It catalyses the reaction a 5-methoxy-2-methyl-3-(all-trans-polyprenyl)benzene-1,4-diol + AH2 + O2 = a 3-demethylubiquinol + A + H2O. Its pathway is cofactor biosynthesis; ubiquinone biosynthesis. In terms of biological role, catalyzes the hydroxylation of 2-nonaprenyl-3-methyl-6-methoxy-1,4-benzoquinol during ubiquinone biosynthesis. This is 3-demethoxyubiquinol 3-hydroxylase from Pseudomonas fluorescens (strain ATCC BAA-477 / NRRL B-23932 / Pf-5).